The following is a 688-amino-acid chain: TBC1 domain family member 25 (688 aa).

A disordered region spans residues Met-1 to Ala-27. Ser-140 is subject to Phosphoserine. At Thr-160 the chain carries Phosphothreonine. The Rab-GAP TBC domain occupies Gly-228–Leu-434. At Ser-506 the chain carries Phosphoserine. A compositionally biased stretch (low complexity) spans Leu-544–Ser-567. A disordered region spans residues Leu-544 to Pro-606. The segment covering Ser-596–Pro-606 has biased composition (pro residues).

In terms of assembly, interacts (via N-terminus) with MAP1LC3B, GABARAP and GABARAPL2.

Its subcellular location is the cytoplasm. The protein resides in the cytoplasmic vesicle. It localises to the autophagosome. Its function is as follows. Acts as a GTPase-activating protein specific for RAB33B. Involved in the regulation of autophagosome maturation, the process in which autophagosomes fuse with endosomes and lysosomes. This is TBC1 domain family member 25 (TBC1D25) from Homo sapiens (Human).